Consider the following 107-residue polypeptide: Putative double-stranded DNA mimic protein YE2228 (107 aa).

Belongs to the putative dsDNA mimic protein family.

In terms of biological role, may act as a double-stranded DNA (dsDNA) mimic. Probably regulates the activity of a dsDNA-binding protein. In Yersinia enterocolitica serotype O:8 / biotype 1B (strain NCTC 13174 / 8081), this protein is Putative double-stranded DNA mimic protein YE2228.